Here is a 72-residue protein sequence, read N- to C-terminus: Translation initiation factor IF-1 (72 aa).

One can recognise an S1-like domain in the interval 1 to 72 (MAKEDCIEME…TKGRIKFRSK (72 aa)).

The protein belongs to the IF-1 family. Component of the 30S ribosomal translation pre-initiation complex which assembles on the 30S ribosome in the order IF-2 and IF-3, IF-1 and N-formylmethionyl-tRNA(fMet); mRNA recruitment can occur at any time during PIC assembly.

Its subcellular location is the cytoplasm. Its function is as follows. One of the essential components for the initiation of protein synthesis. Stabilizes the binding of IF-2 and IF-3 on the 30S subunit to which N-formylmethionyl-tRNA(fMet) subsequently binds. Helps modulate mRNA selection, yielding the 30S pre-initiation complex (PIC). Upon addition of the 50S ribosomal subunit IF-1, IF-2 and IF-3 are released leaving the mature 70S translation initiation complex. This Francisella tularensis subsp. tularensis (strain WY96-3418) protein is Translation initiation factor IF-1.